The primary structure comprises 761 residues: Elongation factor G, mitochondrial (761 aa).

Residues 1–42 (MSVQKMMWVPRKMVGGRIPFFTCSKVFSGFSRRSFHESPLAR) constitute a mitochondrion transit peptide. In terms of domain architecture, tr-type G spans 68–349 (NKLRNIGISA…AIVDYLPNPS (282 aa)). GTP-binding positions include 77–84 (AHIDSGKT), 148–152 (DTPGH), and 202–205 (NKMD).

The protein belongs to the TRAFAC class translation factor GTPase superfamily. Classic translation factor GTPase family. EF-G/EF-2 subfamily. The precursor is processed in two steps involving mitochondrial intermediate peptidase (MIP) and mitochondrial processing peptidase (MPP).

The protein localises to the mitochondrion. It functions in the pathway protein biosynthesis; polypeptide chain elongation. In terms of biological role, mitochondrial GTPase that catalyzes the GTP-dependent ribosomal translocation step during translation elongation. During this step, the ribosome changes from the pre-translocational (PRE) to the post-translocational (POST) state as the newly formed A-site-bound peptidyl-tRNA and P-site-bound deacylated tRNA move to the P and E sites, respectively. Catalyzes the coordinated movement of the two tRNA molecules, the mRNA and conformational changes in the ribosome. The chain is Elongation factor G, mitochondrial from Saccharomyces cerevisiae (strain ATCC 204508 / S288c) (Baker's yeast).